Consider the following 146-residue polypeptide: Ribonuclease P protein component (146 aa).

Belongs to the RnpA family. In terms of assembly, consists of a catalytic RNA component (M1 or rnpB) and a protein subunit.

The enzyme catalyses Endonucleolytic cleavage of RNA, removing 5'-extranucleotides from tRNA precursor.. In terms of biological role, RNaseP catalyzes the removal of the 5'-leader sequence from pre-tRNA to produce the mature 5'-terminus. It can also cleave other RNA substrates such as 4.5S RNA. The protein component plays an auxiliary but essential role in vivo by binding to the 5'-leader sequence and broadening the substrate specificity of the ribozyme. This Chlorobium phaeobacteroides (strain DSM 266 / SMG 266 / 2430) protein is Ribonuclease P protein component.